The sequence spans 268 residues: 3-deoxy-manno-octulosonate cytidylyltransferase (268 aa).

Belongs to the KdsB family.

It localises to the cytoplasm. The catalysed reaction is 3-deoxy-alpha-D-manno-oct-2-ulosonate + CTP = CMP-3-deoxy-beta-D-manno-octulosonate + diphosphate. It functions in the pathway nucleotide-sugar biosynthesis; CMP-3-deoxy-D-manno-octulosonate biosynthesis; CMP-3-deoxy-D-manno-octulosonate from 3-deoxy-D-manno-octulosonate and CTP: step 1/1. Its pathway is bacterial outer membrane biogenesis; lipopolysaccharide biosynthesis. Its function is as follows. Activates KDO (a required 8-carbon sugar) for incorporation into bacterial lipopolysaccharide in Gram-negative bacteria. The polypeptide is 3-deoxy-manno-octulosonate cytidylyltransferase (Psychrobacter arcticus (strain DSM 17307 / VKM B-2377 / 273-4)).